The chain runs to 201 residues: Protein ripply1 (201 aa).

A disordered region spans residues 1–29; that stretch reads MDPAASPAAAPPAAPAAAPAADPAADPAA. Over residues 15–29 the composition is skewed to low complexity; it reads PAAAPAADPAADPAA. The WRPW motif signature appears at 57-60; the sequence is AYLW. A ripply homology domain region spans residues 99-134; that stretch reads HPVRLYWPKSHSFDYLYSAGEILLNNFPVQATINLY. Residues 136 to 174 show a composition bias toward acidic residues; it reads DSDSADNEEDKEEEEEEEEEEDDEEEEEDEDKDVNENEP. The disordered stretch occupies residues 136-201; that stretch reads DSDSADNEED…SPDPHSACPN (66 aa).

It belongs to the ripply family. As to expression, expressed in the anterior presomitic mesoderm and somites of stage E9.5 dpc embryos. Also expressed in tongue, diaphragm and intercostal muscles at 16.5 dpc.

The protein localises to the nucleus. In terms of biological role, plays a role in somitogenesis. Essential for transcriptional repression of the segmental patterning genes, thus terminating the segmentation program in the presomitic mesoderm, and also required for the maintenance of rostrocaudal polarity in somites. This Mus musculus (Mouse) protein is Protein ripply1.